A 795-amino-acid polypeptide reads, in one-letter code: Lon protease (795 aa).

The Lon N-terminal domain maps to 17 to 214 (YPLMPLRDIV…KVYKFLQDEI (198 aa)). 370 to 377 (GPPGVGKT) is an ATP binding site. Positions 605–787 (KPLVGVATGL…EEVFKIALVR (183 aa)) constitute a Lon proteolytic domain. Residues Ser-692 and Lys-735 contribute to the active site.

This sequence belongs to the peptidase S16 family. In terms of assembly, homohexamer. Organized in a ring with a central cavity.

It localises to the cytoplasm. The enzyme catalyses Hydrolysis of proteins in presence of ATP.. Its function is as follows. ATP-dependent serine protease that mediates the selective degradation of mutant and abnormal proteins as well as certain short-lived regulatory proteins. Required for cellular homeostasis and for survival from DNA damage and developmental changes induced by stress. Degrades polypeptides processively to yield small peptide fragments that are 5 to 10 amino acids long. Binds to DNA in a double-stranded, site-specific manner. The chain is Lon protease from Aquifex aeolicus (strain VF5).